A 146-amino-acid chain; its full sequence is Hemoglobin subunit beta (146 aa).

The region spanning 2-146 (HWSAEEKQLI…VAHALARKYH (145 aa)) is the Globin domain. 2 residues coordinate heme b: histidine 63 and histidine 92.

It belongs to the globin family. As to quaternary structure, heterotetramer of two alpha chains and two beta chains. Red blood cells.

Functionally, involved in oxygen transport from the lung to the various peripheral tissues. In Phasianus colchicus colchicus (Black-necked pheasant), this protein is Hemoglobin subunit beta (HBB).